Here is a 233-residue protein sequence, read N- to C-terminus: Protein Mis18-alpha (233 aa).

Residues serine 36, serine 39, and serine 40 each carry the phosphoserine modification. The Mis18 domain maps to 80–178; it reads PLVFLCSGCR…SVEAIESYVL (99 aa). Cysteine 85, cysteine 88, cysteine 141, and cysteine 144 together coordinate Zn(2+). Residue lysine 162 forms a Glycyl lysine isopeptide (Lys-Gly) (interchain with G-Cter in SUMO2) linkage. The residue at position 233 (serine 233) is a Phosphoserine.

It belongs to the mis18 family. In terms of assembly, homodimer, and heterodimer with OIP5/MIS18B. Identified in a complex containing MIS18A, OIP5/MIS18B, MIS18BP1, RBBP7 and RBBP4. In terms of tissue distribution, detected in testis.

It localises to the nucleus. The protein localises to the chromosome. It is found in the centromere. Functionally, required for recruitment of CENPA to centromeres and normal chromosome segregation during mitosis. The sequence is that of Protein Mis18-alpha (MIS18A) from Homo sapiens (Human).